Here is a 625-residue protein sequence, read N- to C-terminus: 1,4-alpha-glucan branching enzyme GlgB (625 aa).

Asp-302 functions as the Nucleophile in the catalytic mechanism. The active-site Proton donor is Glu-355.

The protein belongs to the glycosyl hydrolase 13 family. GlgB subfamily. In terms of assembly, monomer.

The catalysed reaction is Transfers a segment of a (1-&gt;4)-alpha-D-glucan chain to a primary hydroxy group in a similar glucan chain.. Its pathway is glycan biosynthesis; glycogen biosynthesis. In terms of biological role, catalyzes the formation of the alpha-1,6-glucosidic linkages in glycogen by scission of a 1,4-alpha-linked oligosaccharide from growing alpha-1,4-glucan chains and the subsequent attachment of the oligosaccharide to the alpha-1,6 position. The sequence is that of 1,4-alpha-glucan branching enzyme GlgB from Albidiferax ferrireducens (strain ATCC BAA-621 / DSM 15236 / T118) (Rhodoferax ferrireducens).